Reading from the N-terminus, the 147-residue chain is UPF0179 protein NP_3406A (147 aa).

Belongs to the UPF0179 family.

In Natronomonas pharaonis (strain ATCC 35678 / DSM 2160 / CIP 103997 / JCM 8858 / NBRC 14720 / NCIMB 2260 / Gabara) (Halobacterium pharaonis), this protein is UPF0179 protein NP_3406A.